Consider the following 199-residue polypeptide: Pneumococcal vaccine antigen A homolog (199 aa).

The protein resides in the cell surface. This chain is Pneumococcal vaccine antigen A homolog (pvaA), found in Streptococcus pyogenes serotype M3 (strain ATCC BAA-595 / MGAS315).